The following is a 180-amino-acid chain: Large ribosomal subunit protein uL5 (180 aa).

The protein belongs to the universal ribosomal protein uL5 family. As to quaternary structure, part of the 50S ribosomal subunit; part of the 5S rRNA/L5/L18/L25 subcomplex. Contacts the 5S rRNA and the P site tRNA. Forms a bridge to the 30S subunit in the 70S ribosome.

This is one of the proteins that bind and probably mediate the attachment of the 5S RNA into the large ribosomal subunit, where it forms part of the central protuberance. In the 70S ribosome it contacts protein S13 of the 30S subunit (bridge B1b), connecting the 2 subunits; this bridge is implicated in subunit movement. Contacts the P site tRNA; the 5S rRNA and some of its associated proteins might help stabilize positioning of ribosome-bound tRNAs. This Rubrobacter xylanophilus (strain DSM 9941 / JCM 11954 / NBRC 16129 / PRD-1) protein is Large ribosomal subunit protein uL5.